The primary structure comprises 269 residues: UPF0162 protein bbp_163 (269 aa).

This sequence belongs to the UPF0162 family.

This is UPF0162 protein bbp_163 from Buchnera aphidicola subsp. Baizongia pistaciae (strain Bp).